Here is a 549-residue protein sequence, read N- to C-terminus: MCAAEVDRHVAQRYLIKRRLGKGAYGIVWKAMDRRTGEVVAIKKIFDAFRDQIDAQRTFREIMLLKEFGGHPNIIRLLDVIPAKNDRDIYLVFESMDTDLNAVIQKGRLLKDIHKRCIFYQLLRATKFIHSGRVIHRDQKPANVLLDSACRVKLCDFGLARSLGDLPEGPGGQALTEYVATRWYRAPEVLLSSRWYTPGVDMWSLGCILGEMLRGQPLFPGTSTFHQLELILKTIPLPSMEELQDLGSDYSALILQNLGSRPQQTLDALLPPDTPPEALDLLKRLLAFAPDKRLSAEQALQHPYVQRFHCPDREWARESDVRLPVHEGDQLSAPEYRKRLYQIILEQSGNSRSPREEGLGVVASRAELRASPARTQSLKSGVLPQVPAETPARKRGPKPPRSPGHDPEHVEVRRQSSDPLFQLPPPGRGERPPGATGQPPSAPSGVKTQVRAMAPSLTSQAEAQAANQALIRSDPARGGGPRAVGARRVPSRLPREAPEPRPGRRMFGISVSQGAQGAARAALGGYSQAYGTVCRSALGRLPLLPGPRA.

A ubiquitin-conjugating region spans residues 1–20; the sequence is MCAAEVDRHVAQRYLIKRRL. A Protein kinase domain is found at 14–305; sequence YLIKRRLGKG…AEQALQHPYV (292 aa). ATP contacts are provided by residues 20–28 and Lys-43; that span reads LGKGAYGIV. The Proton acceptor role is filled by Asp-138. Thr-176 bears the Phosphothreonine mark. Positions 176-178 match the TXY motif; that stretch reads TEY. Residue Tyr-178 is modified to Phosphotyrosine. The tract at residues 266-286 is necessary to interact with ESRRA, to regulate its subcellular localization and to inhibit its transcriptional activity; that stretch reads LDALLPPDTPPEALDLLKRLL. The tract at residues 301 to 382 is requires for interaction with GABARAP, MAP1LC3B AND GABARAPL1; sequence QHPYVQRFHC…ARTQSLKSGV (82 aa). The tract at residues 370–507 is disordered; it reads ASPARTQSLK…PEPRPGRRMF (138 aa). 2 PXXXP motif repeats span residues 380–384 and 387–391; these read SGVLP and PAETP. PXXXP motif; regulates binding with chromatin and interaction with PCNA repeat units follow at residues 395–399 and 403–407; these read RGPKP and PGHDP. The segment covering 403–416 has biased composition (basic and acidic residues); that stretch reads PGHDPEHVEVRRQS. Arg-451 is modified (omega-N-methylarginine). Over residues 456 to 467 the composition is skewed to polar residues; it reads SLTSQAEAQAAN. A compositionally biased stretch (low complexity) spans 483–492; the sequence is AVGARRVPSR. Over residues 493–502 the composition is skewed to basic and acidic residues; it reads LPREAPEPRP.

Belongs to the protein kinase superfamily. CMGC Ser/Thr protein kinase family. MAP kinase subfamily. Interacts with TGFB1I1. Interacts with CSK/c-Src, ABL1 and RET. Interacts with GABARAP, MAP1LC3B and GABARAPL1; controls, in a kinase-dependent fashion, both basal and starvation-induced autophagy. Interacts with ESRRA; promotes re-localization of ESRRA to the cytoplasm through a XPO1-dependent mechanism then inhibits ESRRA transcriptional activity. Interacts with PCNA; the interaction is chromatin binding- and kinase activity-dependent and prevents MDM2-mediated PCNA destruction by inhibiting the association of PCNA with MDM2. Interacts with DVL2. Interacts with CLIC3; MAPK15 does not phosphorylates CLIC3. Post-translationally, autophosphorylated on Thr-176 and Tyr-178; activates the enzyme. In terms of processing, ubiquitinated. Ubiquitination may allow its tight kinase activity regulation and rapid turnover. May be ubiquitinated by a SCF E3 ligase. As to expression, expressed at all stages of oocyte meiotic maturation.

It is found in the cytoplasm. It localises to the cytoskeleton. The protein resides in the cilium basal body. Its subcellular location is the cell junction. The protein localises to the tight junction. It is found in the microtubule organizing center. It localises to the centrosome. The protein resides in the centriole. Its subcellular location is the cytoplasmic vesicle. The protein localises to the autophagosome. It is found in the golgi apparatus. It localises to the nucleus. The protein resides in the spindle. It carries out the reaction L-seryl-[protein] + ATP = O-phospho-L-seryl-[protein] + ADP + H(+). The catalysed reaction is L-threonyl-[protein] + ATP = O-phospho-L-threonyl-[protein] + ADP + H(+). With respect to regulation, activated by threonine and tyrosine phosphorylation. Inhibited by dual specificity phosphatases, such as DUSP1. Phosphorylation and activation in response to DNA damaging agents, serum stimulation. Constitutively activated when phosphorylated on Tyr-178. Activity depends on the relative rates of MAPK15 autophosphorylation and dephosphorylation by PTPN1. Functionally, atypical MAPK protein that regulates several process such as autophagy, ciliogenesis, protein trafficking/secretion and genome integrity, in a kinase activity-dependent manner. Controls both, basal and starvation-induced autophagy throught its interaction with GABARAP, MAP1LC3B and GABARAPL1 leading to autophagosome formation, SQSTM1 degradation and reduced MAP1LC3B inhibitory phosphorylation. Regulates primary cilium formation and the localization of ciliary proteins involved in cilium structure, transport, and signaling. Prevents the relocation of the sugar-adding enzymes from the Golgi to the endoplasmic reticulum, thereby restricting the production of sugar-coated proteins. Upon amino-acid starvation, mediates transitional endoplasmic reticulum site disassembly and inhibition of secretion. Binds to chromatin leading to MAPK15 activation and interaction with PCNA, that which protects genomic integrity by inhibiting MDM2-mediated degradation of PCNA. Regulates DA transporter (DAT) activity and protein expression via activation of RhoA. In response to H(2)O(2) treatment phosphorylates ELAVL1, thus preventing it from binding to the PDCD4 3'UTR and rendering the PDCD4 mRNA accessible to miR-21 and leading to its degradation and loss of protein expression. Also functions in a kinase activity-independent manner as a negative regulator of growth. Phosphorylates in vitro FOS and MBP. During oocyte maturation, plays a key role in the microtubule organization and meiotic cell cycle progression in oocytes, fertilized eggs, and early embryos. Interacts with ESRRA promoting its re-localization from the nucleus to the cytoplasm and then prevents its transcriptional activity. The sequence is that of Mitogen-activated protein kinase 15 from Mus musculus (Mouse).